Consider the following 215-residue polypeptide: Probable transaldolase (215 aa).

Lysine 83 (schiff-base intermediate with substrate) is an active-site residue.

It belongs to the transaldolase family. Type 3B subfamily.

Its subcellular location is the cytoplasm. The catalysed reaction is D-sedoheptulose 7-phosphate + D-glyceraldehyde 3-phosphate = D-erythrose 4-phosphate + beta-D-fructose 6-phosphate. It participates in carbohydrate degradation; pentose phosphate pathway; D-glyceraldehyde 3-phosphate and beta-D-fructose 6-phosphate from D-ribose 5-phosphate and D-xylulose 5-phosphate (non-oxidative stage): step 2/3. In terms of biological role, transaldolase is important for the balance of metabolites in the pentose-phosphate pathway. This chain is Probable transaldolase, found in Clostridium kluyveri (strain NBRC 12016).